The sequence spans 838 residues: Envelope glycoprotein H (838 aa).

The signal sequence occupies residues 1–18 (MGNGLWFVGVIILGAAWG). The Virion surface segment spans residues 19–803 (QVHDWTEQTD…DTQPVAAIAP (785 aa)). N-linked (GlcNAc...) asparagine; by host glycans are attached at residues Asn-73 and Asn-120. The tract at residues 174–204 (FPRGDNVATASHPSGPRDTPPPRPPVGARRH) is disordered. Residue Asn-216 is glycosylated (N-linked (GlcNAc...) asparagine; by host). The tract at residues 259-323 (DAALVRARYG…PGGPRYRVFV (65 aa)) is interaction with gL. 4 N-linked (GlcNAc...) asparagine; by host glycosylation sites follow: Asn-332, Asn-437, Asn-670, and Asn-784. Residues 804–824 (GFLAASALGVVMITAALAGIL) traverse the membrane as a helical segment. Topologically, residues 825-838 (KVLRTSVPFFWRRE) are intravirion.

Belongs to the herpesviridae glycoprotein H family. In terms of assembly, interacts with glycoprotein L (gL); this interaction is necessary for the correct processing and cell surface expression of gH. The heterodimer gH/gL seems to interact with gB trimers during fusion. N-glycosylated, O-glycosylated, and sialylated.

It is found in the virion membrane. Its subcellular location is the host cell membrane. The protein resides in the host endosome membrane. Functionally, the heterodimer glycoprotein H-glycoprotein L is required for the fusion of viral and plasma membranes leading to virus entry into the host cell. Following initial binding to host receptor, membrane fusion is mediated by the fusion machinery composed of gB and the heterodimer gH/gL. May also be involved in the fusion between the virion envelope and the outer nuclear membrane during virion morphogenesis. This Homo sapiens (Human) protein is Envelope glycoprotein H.